Consider the following 492-residue polypeptide: Glutamate--cysteine ligase A, chloroplastic (492 aa).

Cysteine 156 and cysteine 376 are disulfide-bonded.

Belongs to the carboxylate-amine ligase family. Glutamate--cysteine ligase type 2 subfamily. Homodimer or monomer when oxidized or reduced, respectively. Post-translationally, the Cys-156-Cys-376 disulfide bridge is known to modulate the enzyme activity according to the redox status. The oxidized form constitutes the active enzyme.

It is found in the plastid. It localises to the chloroplast. It catalyses the reaction L-cysteine + L-glutamate + ATP = gamma-L-glutamyl-L-cysteine + ADP + phosphate + H(+). The protein operates within sulfur metabolism; glutathione biosynthesis; glutathione from L-cysteine and L-glutamate: step 1/2. The polypeptide is Glutamate--cysteine ligase A, chloroplastic (GSH1-1) (Oryza sativa subsp. indica (Rice)).